Here is a 557-residue protein sequence, read N- to C-terminus: Aspartate--tRNA ligase (557 aa).

Residue Glu168 coordinates L-aspartate. The tract at residues Gln192–Lys195 is aspartate. Arg214 lines the L-aspartate pocket. Residues Arg214–Glu216 and Gln223 contribute to the ATP site. Residue His423 participates in L-aspartate binding. Glu457 provides a ligand contact to ATP. Arg464 is a binding site for L-aspartate. Position 505 to 508 (Gly505 to Arg508) interacts with ATP.

Belongs to the class-II aminoacyl-tRNA synthetase family. Type 1 subfamily. In terms of assembly, homodimer.

The protein resides in the cytoplasm. It catalyses the reaction tRNA(Asp) + L-aspartate + ATP = L-aspartyl-tRNA(Asp) + AMP + diphosphate. Its function is as follows. Catalyzes the attachment of L-aspartate to tRNA(Asp) in a two-step reaction: L-aspartate is first activated by ATP to form Asp-AMP and then transferred to the acceptor end of tRNA(Asp). The chain is Aspartate--tRNA ligase from Mycoplasma pneumoniae (strain ATCC 29342 / M129 / Subtype 1) (Mycoplasmoides pneumoniae).